Here is a 275-residue protein sequence, read N- to C-terminus: MIGVVVLGATGRMGRRICRMVIEDEELELVGAIASPTSKHLGRDVGLVIGVGETGVEIAPPTALPNIAKDADVAIDFTVREATLENAPKAARAGLDLVIGTTGFSDEDLRVLEHEIEEAGVSAVISPNMSLGVNLLFELTRQLARVLGDNGFDFEIVEIHHRHKVDAPSGTALELAAIIEEELGKGEKVFGREGNVGPRDDDEIGVLAVRGGEVVGDHTVMALGEYERIELTHRALSRDAFAKGALVAAKFVVEAPPGIYSMRDVLFGGKRGEGL.

NAD(+)-binding positions include 8-13 (GATGRM), 100-102 (GTT), and 126-129 (SPNM). His160 functions as the Proton donor/acceptor in the catalytic mechanism. A (S)-2,3,4,5-tetrahydrodipicolinate-binding site is contributed by His161. Lys164 functions as the Proton donor in the catalytic mechanism. 170-171 (GT) lines the (S)-2,3,4,5-tetrahydrodipicolinate pocket.

Belongs to the DapB family.

It localises to the cytoplasm. The enzyme catalyses (S)-2,3,4,5-tetrahydrodipicolinate + NAD(+) + H2O = (2S,4S)-4-hydroxy-2,3,4,5-tetrahydrodipicolinate + NADH + H(+). It carries out the reaction (S)-2,3,4,5-tetrahydrodipicolinate + NADP(+) + H2O = (2S,4S)-4-hydroxy-2,3,4,5-tetrahydrodipicolinate + NADPH + H(+). The protein operates within amino-acid biosynthesis; L-lysine biosynthesis via DAP pathway; (S)-tetrahydrodipicolinate from L-aspartate: step 4/4. Catalyzes the conversion of 4-hydroxy-tetrahydrodipicolinate (HTPA) to tetrahydrodipicolinate. This is 4-hydroxy-tetrahydrodipicolinate reductase from Methanopyrus kandleri (strain AV19 / DSM 6324 / JCM 9639 / NBRC 100938).